A 1331-amino-acid chain; its full sequence is X-linked retinitis pigmentosa GTPase regulator-interacting protein 1 (1331 aa).

Disordered regions lie at residues 1 to 165 (MQHL…PPAF), 183 to 220 (SQLT…SEEC), and 351 to 374 (HQPL…LPPQ). The span at 41–67 (NQKELNCRRLHLHEEPTLVKEPSPKQR) shows a compositional bias: basic and acidic residues. Composition is skewed to polar residues over residues 77–86 (VQRSTTTQPD) and 183–193 (SQLTHTMTTDS). Positions 194-220 (THVEEIPRSPEKTSKVEKPEQRSSEEC) are enriched in basic and acidic residues. 2 coiled-coil regions span residues 236 to 352 (ELIR…SSHQ) and 498 to 546 (MCYQ…LRSH). A compositionally biased stretch (polar residues) spans 351–367 (HQPLDSSHQPHWSTELT). The region spanning 745-870 (GARKVQSNES…AQNKSIKGDF (126 aa)) is the C2 domain. Disordered regions lie at residues 899-1057 (FQMS…VQDK) and 1088-1146 (AEDG…SDDI). Positions 908–999 (EGEEKEEEGG…DVLEASFTEE (92 aa)) form a coiled coil. Residues 910–988 (EEKEEEGGEE…EEEEEEEDEN (79 aa)) show a composition bias toward acidic residues. Composition is skewed to basic and acidic residues over residues 1022-1039 (PEKR…REHQ) and 1088-1115 (AEDG…EHPS). The segment covering 1129-1141 (CEQASEVSETQTT) has biased composition (polar residues). The tract at residues 1136-1326 (SETQTTDSDD…ALHGIYKEMT (191 aa)) is interaction with RPGR.

This sequence belongs to the RPGRIP1 family. In terms of assembly, interacts with NPHP4. Interacts with NEK4. Forms homodimers and elongated homopolymers. Interacts with RPGR. Interacts with SPATA7. Interacts with CEP290/NPHP6; mediating the association between RPGR and CEP290/NPHP6. Expressed in the retina (at protein level).

It is found in the cell projection. The protein localises to the cilium. In terms of biological role, may function as scaffolding protein. Required for normal location of RPGR at the connecting cilium of photoreceptor cells. Required for normal disk morphogenesis and disk organization in the outer segment of photoreceptor cells and for survival of photoreceptor cells. This Mus musculus (Mouse) protein is X-linked retinitis pigmentosa GTPase regulator-interacting protein 1 (Rpgrip1).